A 525-amino-acid chain; its full sequence is Peptide chain release factor 3 (525 aa).

One can recognise a tr-type G domain in the interval 8–276 (AMRRTFAIIS…AFVKEAPPPQ (269 aa)). Residues 17–24 (SHPDAGKT), 85–89 (DTPGH), and 139–142 (NKMD) each bind GTP.

This sequence belongs to the TRAFAC class translation factor GTPase superfamily. Classic translation factor GTPase family. PrfC subfamily.

The protein resides in the cytoplasm. Its function is as follows. Increases the formation of ribosomal termination complexes and stimulates activities of RF-1 and RF-2. It binds guanine nucleotides and has strong preference for UGA stop codons. It may interact directly with the ribosome. The stimulation of RF-1 and RF-2 is significantly reduced by GTP and GDP, but not by GMP. This Coxiella burnetii (strain RSA 331 / Henzerling II) protein is Peptide chain release factor 3.